The chain runs to 621 residues: Solute carrier family 2, facilitated glucose transporter member 12 (621 aa).

Over M1–S48 the chain is Cytoplasmic. The chain crosses the membrane as a helical span at residues V49–L69. Over L70–E84 the chain is Extracellular. Residues M85–I105 form a helical membrane-spanning segment. Residues D106–C119 are Cytoplasmic-facing. Residues L120–G140 form a helical membrane-spanning segment. Position 141 (R141) is a topological domain, extracellular. A helical transmembrane segment spans residues I142–I162. Topologically, residues A163 to E176 are cytoplasmic. Residues L177–F197 traverse the membrane as a helical segment. Topologically, residues H198–K201 are extracellular. A helical transmembrane segment spans residues Y202 to P222. Residues P223–R282 are Cytoplasmic-facing. A helical transmembrane segment spans residues I283–F303. Over Y304 to S321 the chain is Extracellular. A helical membrane pass occupies residues L322 to V342. The Cytoplasmic segment spans residues D343 to T349. The helical transmembrane segment at F350–L370 threads the bilayer. At N371–A470 the chain is on the extracellular side. N-linked (GlcNAc...) asparagine glycosylation is found at N375, N387, N400, and N405. A helical membrane pass occupies residues S471–L491. The Cytoplasmic portion of the chain corresponds to S492 to R502. The chain crosses the membrane as a helical span at residues A503–L523. Residues T524–P532 are Extracellular-facing. A helical transmembrane segment spans residues W533 to I553. Residues P554–N621 are Cytoplasmic-facing.

The protein belongs to the major facilitator superfamily. Sugar transporter (TC 2.A.1.1) family. Glucose transporter subfamily.

It localises to the cell membrane. It is found in the endomembrane system. The protein localises to the cytoplasm. Its subcellular location is the perinuclear region. The enzyme catalyses D-glucose(out) = D-glucose(in). Functionally, insulin-independent facilitative glucose transporter. The polypeptide is Solute carrier family 2, facilitated glucose transporter member 12 (Macaca fascicularis (Crab-eating macaque)).